A 629-amino-acid polypeptide reads, in one-letter code: Solute carrier family 22 member 14 (629 aa).

Residues 1–21 (MKEDQNYKTAFGSQNSRDTHR) are disordered. The Cytoplasmic portion of the chain corresponds to 1–67 (MKEDQNYKTA…IGEFGTFQWR (67 aa)). The span at 7–16 (YKTAFGSQNS) shows a compositional bias: polar residues. Residues 68–88 (LVVLTFIPSILSTFFIFSHHF) form a helical membrane-spanning segment. The Extracellular segment spans residues 89–183 (LLTAQRPYCN…LVCGNEPNKE (95 aa)). N-linked (GlcNAc...) asparagine glycosylation is found at asparagine 98, asparagine 116, asparagine 124, and asparagine 149. The helical transmembrane segment at 184–204 (NGLTVFLSGVLTGSLLFGFLS) threads the bilayer. The Cytoplasmic segment spans residues 205–209 (DKLGR). The helical transmembrane segment at 210-230 (YPIILLSLLGFLIFGFGTAFV) threads the bilayer. Residues 231-240 (SSFYQYLFFR) are Extracellular-facing. The helical transmembrane segment at 241-261 (FFVAQASVGYAICSVSLVMEW) threads the bilayer. Over 262–269 (LVGEHRAQ) the chain is Cytoplasmic. Residues 270–290 (AVILQHSFLTIGVILLTGLAY) form a helical membrane-spanning segment. Residues 291-295 (KVVHW) are Extracellular-facing. The chain crosses the membrane as a helical span at residues 296 to 316 (RLLCLLGGMPMFPLICNIWVL). Residues 317–378 (RESPRWLMVR…DFCTNQHLFK (62 aa)) are Cytoplasmic-facing. The chain crosses the membrane as a helical span at residues 379 to 399 (VVLAIGCVWFTVSYISFTLNL). Residues 400–409 (KMNDFGLDVY) are Extracellular-facing. A helical membrane pass occupies residues 410-430 (FVQMVRSIVAVPARLCCIILL). The Cytoplasmic portion of the chain corresponds to 431–436 (EYFGRK). A helical transmembrane segment spans residues 437-457 (WALNLTLFLVTSMCLFLLFLP). At 458–463 (QEPKST) the chain is on the extracellular side. Residues 464-484 (IILTLMLAEFSMAGTLSIFFI) traverse the membrane as a helical segment. Topologically, residues 485–496 (YTAELLPTVLRS) are cytoplasmic. The helical transmembrane segment at 497–517 (TGLGMVSLAWVAGAISSVAIF) threads the bilayer. The Extracellular portion of the chain corresponds to 518 to 523 (KQTKTQ). A helical membrane pass occupies residues 524–544 (LPIFFCCLCCVLALCFSSLVP). The Cytoplasmic segment spans residues 545–629 (ETGSQSLRDS…PVQSLKAQPP (85 aa)).

This sequence belongs to the major facilitator (TC 2.A.1) superfamily. Organic cation transporter (TC 2.A.1.19) family. Testis-specific (at protein level). Specifically expressed in male germ cells (at protein level).

The protein resides in the mitochondrion inner membrane. It localises to the cell projection. Its subcellular location is the cilium. It is found in the flagellum membrane. The enzyme catalyses riboflavin(in) = riboflavin(out). Functionally, riboflavin transporter localized at the inner mitochondrial membrane of the spermatozoa midpiece, which is required for male fertility. SLC22A14-mediated riboflavin transport is essential for spermatozoa energy generation and motility: riboflavin is the precursor of FMN and FAD, which are coenzymes of many enzymes in the TCA cycle (the citric acid cycle) in mitochondria. Required for sperm motility and normal sperm flagellar structure. This chain is Solute carrier family 22 member 14, found in Mus musculus (Mouse).